A 283-amino-acid chain; its full sequence is Flagellar filament 35 kDa core protein (283 aa).

It belongs to the bacterial flagellin family. In terms of assembly, the flagellum consists of two outer layers around a core that contains several antigenically related polypeptides.

It is found in the periplasmic flagellum. It localises to the periplasm. Component of the core of the flagella. The chain is Flagellar filament 35 kDa core protein (flaB) from Leptospira interrogans serogroup Icterohaemorrhagiae serovar Lai (strain 56601).